A 320-amino-acid polypeptide reads, in one-letter code: HPr kinase/phosphorylase (320 aa).

Residues H139 and K160 contribute to the active site. 154–161 (GDSGVGKS) provides a ligand contact to ATP. S161 provides a ligand contact to Mg(2+). D178 (proton acceptor; for phosphorylation activity. Proton donor; for dephosphorylation activity) is an active-site residue. An important for the catalytic mechanism of both phosphorylation and dephosphorylation region spans residues 202 to 211 (MEIRGIGIID). E203 is a binding site for Mg(2+). The active site involves R244. The important for the catalytic mechanism of dephosphorylation stretch occupies residues 265 to 270 (PVKTGR).

It belongs to the HPrK/P family. Homohexamer. The cofactor is Mg(2+).

The catalysed reaction is [HPr protein]-L-serine + ATP = [HPr protein]-O-phospho-L-serine + ADP + H(+). It catalyses the reaction [HPr protein]-O-phospho-L-serine + phosphate + H(+) = [HPr protein]-L-serine + diphosphate. Its function is as follows. Catalyzes the ATP- as well as the pyrophosphate-dependent phosphorylation of a specific serine residue in HPr, a phosphocarrier protein of the phosphoenolpyruvate-dependent sugar phosphotransferase system (PTS). HprK/P also catalyzes the pyrophosphate-producing, inorganic phosphate-dependent dephosphorylation (phosphorolysis) of seryl-phosphorylated HPr (P-Ser-HPr). The two antagonistic activities of HprK/P are regulated by several intracellular metabolites, which change their concentration in response to the absence or presence of rapidly metabolisable carbon sources (glucose, fructose, etc.) in the growth medium. Therefore, by controlling the phosphorylation state of HPr, HPrK/P is a sensor enzyme that plays a major role in the regulation of carbon metabolism and sugar transport: it mediates carbon catabolite repression (CCR), and regulates PTS-catalyzed carbohydrate uptake and inducer exclusion. In Limosilactobacillus reuteri (strain DSM 20016) (Lactobacillus reuteri), this protein is HPr kinase/phosphorylase.